The following is a 580-amino-acid chain: Arginine--tRNA ligase (580 aa).

The 'HIGH' region signature appears at 123–133; sequence PNIAKEMHVGH.

It belongs to the class-I aminoacyl-tRNA synthetase family. Monomer.

Its subcellular location is the cytoplasm. It carries out the reaction tRNA(Arg) + L-arginine + ATP = L-arginyl-tRNA(Arg) + AMP + diphosphate. This is Arginine--tRNA ligase (argS) from Buchnera aphidicola subsp. Schizaphis graminum (strain Sg).